The following is a 144-amino-acid chain: 3-hydroxyacyl-[acyl-carrier-protein] dehydratase FabZ (144 aa).

The active site involves His51.

This sequence belongs to the thioester dehydratase family. FabZ subfamily.

Its subcellular location is the cytoplasm. It carries out the reaction a (3R)-hydroxyacyl-[ACP] = a (2E)-enoyl-[ACP] + H2O. In terms of biological role, involved in unsaturated fatty acids biosynthesis. Catalyzes the dehydration of short chain beta-hydroxyacyl-ACPs and long chain saturated and unsaturated beta-hydroxyacyl-ACPs. The protein is 3-hydroxyacyl-[acyl-carrier-protein] dehydratase FabZ of Clostridium botulinum (strain Okra / Type B1).